Consider the following 83-residue polypeptide: U5-theraphotoxin-Hs1a 4 (83 aa).

A signal peptide spans 1-21 (MKTSMFLTLTGLVLLFVDCYA). Positions 22 to 49 (SESEEKEFPKELLSSIFAADSDFKVEER) are excised as a propeptide. Cystine bridges form between C51–C63, C56–C68, and C62–C75.

This sequence belongs to the neurotoxin 10 (Hwtx-1) family. 51 (Hntx-8) subfamily. Hntx-8 sub-subfamily. Expressed by the venom gland.

Its subcellular location is the secreted. In terms of biological role, agglutinates erythrocytes. This Cyriopagopus schmidti (Chinese bird spider) protein is U5-theraphotoxin-Hs1a 4.